A 212-amino-acid polypeptide reads, in one-letter code: Thymidylate kinase (212 aa).

ATP is bound at residue 10–17 (GPDGAGKT).

This sequence belongs to the thymidylate kinase family.

It catalyses the reaction dTMP + ATP = dTDP + ADP. In terms of biological role, phosphorylation of dTMP to form dTDP in both de novo and salvage pathways of dTTP synthesis. The protein is Thymidylate kinase of Enterococcus faecalis (strain ATCC 700802 / V583).